The primary structure comprises 142 residues: Secreted RxLR effector protein 161 (142 aa).

A signal peptide spans 1–27 (MKNVPYLSAVGAIMYLMVVTRPDLAAA). A RxLR motif is present at residues 48–51 (RVLR).

It belongs to the RxLR effector family.

The protein resides in the secreted. Its subcellular location is the host chloroplast envelope. It is found in the host nucleus. Secreted effector that completely suppresses the host cell death induced by cell death-inducing proteins. This is Secreted RxLR effector protein 161 from Plasmopara viticola (Downy mildew of grapevine).